Here is a 288-residue protein sequence, read N- to C-terminus: Energy-coupling factor transporter ATP-binding protein EcfA2 (288 aa).

One can recognise an ABC transporter domain in the interval 3–246; sequence IKLEQLGYCY…PDALVDLGLS (244 aa). Position 40-47 (40-47) interacts with ATP; sequence GHTGSGKS.

Belongs to the ABC transporter superfamily. Energy-coupling factor EcfA family. In terms of assembly, forms a stable energy-coupling factor (ECF) transporter complex composed of 2 membrane-embedded substrate-binding proteins (S component), 2 ATP-binding proteins (A component) and 2 transmembrane proteins (T component).

It localises to the cell membrane. Functionally, ATP-binding (A) component of a common energy-coupling factor (ECF) ABC-transporter complex. Unlike classic ABC transporters this ECF transporter provides the energy necessary to transport a number of different substrates. This Listeria welshimeri serovar 6b (strain ATCC 35897 / DSM 20650 / CCUG 15529 / CIP 8149 / NCTC 11857 / SLCC 5334 / V8) protein is Energy-coupling factor transporter ATP-binding protein EcfA2.